A 214-amino-acid chain; its full sequence is Thiamine-phosphate synthase (214 aa).

4-amino-2-methyl-5-(diphosphooxymethyl)pyrimidine is bound by residues 37 to 41 (QYREK) and asparagine 73. Mg(2+)-binding residues include aspartate 74 and aspartate 93. Serine 112 provides a ligand contact to 4-amino-2-methyl-5-(diphosphooxymethyl)pyrimidine. 139–141 (TIS) provides a ligand contact to 2-[(2R,5Z)-2-carboxy-4-methylthiazol-5(2H)-ylidene]ethyl phosphate. Residue lysine 142 coordinates 4-amino-2-methyl-5-(diphosphooxymethyl)pyrimidine. 2-[(2R,5Z)-2-carboxy-4-methylthiazol-5(2H)-ylidene]ethyl phosphate is bound by residues glycine 171 and 191–192 (IS).

It belongs to the thiamine-phosphate synthase family. Requires Mg(2+) as cofactor.

It catalyses the reaction 2-[(2R,5Z)-2-carboxy-4-methylthiazol-5(2H)-ylidene]ethyl phosphate + 4-amino-2-methyl-5-(diphosphooxymethyl)pyrimidine + 2 H(+) = thiamine phosphate + CO2 + diphosphate. The catalysed reaction is 2-(2-carboxy-4-methylthiazol-5-yl)ethyl phosphate + 4-amino-2-methyl-5-(diphosphooxymethyl)pyrimidine + 2 H(+) = thiamine phosphate + CO2 + diphosphate. The enzyme catalyses 4-methyl-5-(2-phosphooxyethyl)-thiazole + 4-amino-2-methyl-5-(diphosphooxymethyl)pyrimidine + H(+) = thiamine phosphate + diphosphate. It functions in the pathway cofactor biosynthesis; thiamine diphosphate biosynthesis; thiamine phosphate from 4-amino-2-methyl-5-diphosphomethylpyrimidine and 4-methyl-5-(2-phosphoethyl)-thiazole: step 1/1. Functionally, condenses 4-methyl-5-(beta-hydroxyethyl)thiazole monophosphate (THZ-P) and 2-methyl-4-amino-5-hydroxymethyl pyrimidine pyrophosphate (HMP-PP) to form thiamine monophosphate (TMP). This chain is Thiamine-phosphate synthase, found in Listeria monocytogenes serotype 4b (strain F2365).